Consider the following 628-residue polypeptide: uncharacterized protein (628 aa).

Disordered regions lie at residues 1–65 (MDTN…ISSA) and 80–125 (SLRN…VSLS). The span at 12–21 (ISPSIASSFP) shows a compositional bias: low complexity. Polar residues predominate over residues 25 to 37 (PFSSQNSTTSNPE). Composition is skewed to low complexity over residues 48-64 (SSII…NISS) and 87-102 (SPHI…SSSS). Residues 103 to 116 (DLDKSMLDEKHPDS) are compositionally biased toward basic and acidic residues. 12 helical membrane-spanning segments follow: residues 157–177 (IITC…SISL), 203–223 (VGTG…NLLM), 230–250 (LWLS…AVLG), 259–279 (FIAL…GFAF), 294–314 (IGWY…LSAA), 324–344 (LYGY…QGLF), 417–437 (LWPP…LVNY), 454–474 (VSLL…TVLP), 483–503 (MLFF…TTFV), 511–531 (VGLL…MTWV), 542–562 (VGVA…SVVA), and 583–603 (MCGM…VQKF).

The protein belongs to the major facilitator superfamily. Allantoate permease family.

The protein localises to the membrane. This is an uncharacterized protein from Schizosaccharomyces pombe (strain 972 / ATCC 24843) (Fission yeast).